Consider the following 94-residue polypeptide: Enhancer of yellow 2 transcription factor (94 aa).

Belongs to the ENY2 family. As to quaternary structure, component of the nuclear pore complex (NPC)-associated AMEX complex (anchoring and mRNA export complex), composed of at least e(y)2 and xmas-2. Component of the SAGA transcription coactivator-HAT complexes, at least composed of Ada2b, e(y)2, Pcaf/Gcn5, Taf10 and Nipped-A/Trrap. Within the SAGA complex, e(y)2, Sgf11, and not/nonstop form an additional subcomplex of SAGA called the DUB module (deubiquitination module). Component of the THO complex, composed of at least e(y)2, HPR1, THO2, THOC5, THOC6 and THOC7. Interacts with e(y)1. Interacts with su(Hw) (via zinc fingers). Interacts with xmas-2; required for localization to the nuclear periphery. Interacts with the nuclear pore complex (NPC).

It is found in the nucleus. It localises to the nucleoplasm. Its subcellular location is the cytoplasm. Its function is as follows. Involved in mRNA export coupled transcription activation by association with both the AMEX and the SAGA complexes. The SAGA complex is a multiprotein complex that activates transcription by remodeling chromatin and mediating histone acetylation and deubiquitination. Within the SAGA complex, participates in a subcomplex that specifically deubiquitinates histone H2B. The SAGA complex is recruited to specific gene promoters by activators, where it is required for transcription. Required for nuclear receptor-mediated transactivation. Involved in transcription elongation by recruiting the THO complex onto nascent mRNA. The AMEX complex functions in docking export-competent ribonucleoprotein particles (mRNPs) to the nuclear entrance of the nuclear pore complex (nuclear basket). AMEX participates in mRNA export and accurate chromatin positioning in the nucleus by tethering genes to the nuclear periphery. This is Enhancer of yellow 2 transcription factor from Drosophila grimshawi (Hawaiian fruit fly).